Here is a 634-residue protein sequence, read N- to C-terminus: Chaperone protein DnaK (634 aa).

Threonine 199 carries the phosphothreonine; by autocatalysis modification. The span at 601 to 618 (AAAGQAQAESGAGAQGNA) shows a compositional bias: low complexity. Residues 601–634 (AAAGQAQAESGAGAQGNAKPDDVVDAEFEEVDKK) are disordered. Residues 623–634 (VVDAEFEEVDKK) show a composition bias toward acidic residues.

This sequence belongs to the heat shock protein 70 family.

In terms of biological role, acts as a chaperone. The sequence is that of Chaperone protein DnaK from Acidithiobacillus ferrooxidans (strain ATCC 23270 / DSM 14882 / CIP 104768 / NCIMB 8455) (Ferrobacillus ferrooxidans (strain ATCC 23270)).